Consider the following 140-residue polypeptide: Probable prefoldin subunit 6 (140 aa).

Belongs to the prefoldin subunit beta family. In terms of assembly, heterohexamer of two PFD-alpha type and four PFD-beta type subunits.

Functionally, binds specifically to cytosolic chaperonin (c-CPN) and transfers target proteins to it. Binds to nascent polypeptide chain and promotes folding in an environment in which there are many competing pathways for nonnative proteins. The polypeptide is Probable prefoldin subunit 6 (pfdn6) (Dictyostelium discoideum (Social amoeba)).